The chain runs to 310 residues: Beta sliding clamp (310 aa).

It belongs to the beta sliding clamp family. In terms of assembly, forms a ring-shaped head-to-tail homodimer around DNA which binds and tethers DNA polymerases and other proteins to the DNA. The DNA replisome complex has a single clamp-loading complex (3 tau and 1 each of delta, delta', psi and chi subunits) which binds 3 Pol III cores (1 core on the leading strand and 2 on the lagging strand) each with a beta sliding clamp dimer. Additional proteins in the replisome are other copies of gamma, psi and chi, Ssb, DNA helicase and RNA primase.

Its subcellular location is the cytoplasm. Confers DNA tethering and processivity to DNA polymerases and other proteins. Acts as a clamp, forming a ring around DNA (a reaction catalyzed by the clamp-loading complex) which diffuses in an ATP-independent manner freely and bidirectionally along dsDNA. Initially characterized for its ability to contact the catalytic subunit of DNA polymerase III (Pol III), a complex, multichain enzyme responsible for most of the replicative synthesis in bacteria; Pol III exhibits 3'-5' exonuclease proofreading activity. The beta chain is required for initiation of replication as well as for processivity of DNA replication. The chain is Beta sliding clamp (dnaN) from Micrococcus luteus (Micrococcus lysodeikticus).